The following is a 319-amino-acid chain: Class I histocompatibility antigen, Non-RT1.A alpha-1 chain (319 aa).

The N-terminal stretch at 1–24 is a signal peptide; the sequence is MGAMAPRTLLLLLAAVLAPTQTWA. The alpha-1 stretch occupies residues 25–114; sequence GSHSLRYFHT…LLSYYNQSEG (90 aa). Residues 25 to 307 lie on the Extracellular side of the membrane; that stretch reads GSHSLRYFHT…WEPSPSTDSN (283 aa). A glycan (N-linked (GlcNAc...) asparagine) is linked at Asn110. The alpha-2 stretch occupies residues 115–206; the sequence is GSHTIQRMYG…ERGKETLLRS (92 aa). 2 disulfide bridges follow: Cys125–Cys188 and Cys227–Cys283. The tract at residues 207-298 is alpha-3; sequence DPPEAHVTLH…GLPEPLSQRW (92 aa). The 87-residue stretch at 209-295 folds into the Ig-like C1-type domain; that stretch reads PEAHVTLHPR…EHEGLPEPLS (87 aa). Asn280 carries an N-linked (GlcNAc...) asparagine glycan. The tract at residues 299 to 307 is connecting peptide; that stretch reads EPSPSTDSN. Residues 308 to 319 form a helical membrane-spanning segment; sequence LLLLFLELWQFL.

The protein belongs to the MHC class I family. Heterodimer of an alpha chain and a beta chain (beta-2-microglobulin).

It is found in the membrane. Involved in the presentation of foreign antigens to the immune system. This Rattus norvegicus (Rat) protein is Class I histocompatibility antigen, Non-RT1.A alpha-1 chain (RT1-Aw2).